The chain runs to 297 residues: N-acetylmannosamine kinase (297 aa).

Residues 5–12 and 132–139 each bind ATP; these read ALDIGGTK and GVGGGIIL. The Zn(2+) site is built by H156, C166, C168, and C173.

This sequence belongs to the ROK (NagC/XylR) family. NanK subfamily. As to quaternary structure, homodimer.

The catalysed reaction is an N-acyl-D-mannosamine + ATP = an N-acyl-D-mannosamine 6-phosphate + ADP + H(+). The protein operates within amino-sugar metabolism; N-acetylneuraminate degradation; D-fructose 6-phosphate from N-acetylneuraminate: step 2/5. Its function is as follows. Catalyzes the phosphorylation of N-acetylmannosamine (ManNAc) to ManNAc-6-P. In Pasteurella multocida (strain Pm70), this protein is N-acetylmannosamine kinase.